A 209-amino-acid chain; its full sequence is Uracil phosphoribosyltransferase (209 aa).

5-phospho-alpha-D-ribose 1-diphosphate contacts are provided by residues Arg79, Arg104, and 131 to 139; that span reads DPMLATGGS. Residues Ile194 and 199-201 each bind uracil; that span reads GDA. 5-phospho-alpha-D-ribose 1-diphosphate is bound at residue Asp200.

Belongs to the UPRTase family. It depends on Mg(2+) as a cofactor.

The enzyme catalyses UMP + diphosphate = 5-phospho-alpha-D-ribose 1-diphosphate + uracil. It functions in the pathway pyrimidine metabolism; UMP biosynthesis via salvage pathway; UMP from uracil: step 1/1. Allosterically activated by GTP. Catalyzes the conversion of uracil and 5-phospho-alpha-D-ribose 1-diphosphate (PRPP) to UMP and diphosphate. This is Uracil phosphoribosyltransferase from Francisella tularensis subsp. novicida (strain U112).